We begin with the raw amino-acid sequence, 210 residues long: Large ribosomal subunit protein uL4 (210 aa).

The disordered stretch occupies residues 49–76 (HCTKTRSEVSGGGKKPWRQKHTGRARHG). Basic residues predominate over residues 63 to 76 (KPWRQKHTGRARHG).

The protein belongs to the universal ribosomal protein uL4 family. In terms of assembly, part of the 50S ribosomal subunit.

One of the primary rRNA binding proteins, this protein initially binds near the 5'-end of the 23S rRNA. It is important during the early stages of 50S assembly. It makes multiple contacts with different domains of the 23S rRNA in the assembled 50S subunit and ribosome. In terms of biological role, forms part of the polypeptide exit tunnel. This Thermodesulfovibrio yellowstonii (strain ATCC 51303 / DSM 11347 / YP87) protein is Large ribosomal subunit protein uL4.